The chain runs to 316 residues: Taste receptor type 2 member 3 (316 aa).

The Extracellular portion of the chain corresponds to 1–7; sequence MFGFIEG. The helical transmembrane segment at 8-28 threads the bilayer; that stretch reads VFLVLTITEFILGNLVNGFIV. Residues 29–50 are Cytoplasmic-facing; that stretch reads SINSSYWFKSKKISLSNFIITS. Residues 51-71 form a helical membrane-spanning segment; the sequence is LALFRIFLLWIIFIDSLIIVF. Residues 72-86 are Extracellular-facing; that stretch reads SYQTHDSGIMMQLID. The chain crosses the membrane as a helical span at residues 87–107; that stretch reads VFWTFTNHFSIWLISCLSVFY. Residues 108–128 lie on the Cytoplasmic side of the membrane; it reads CLKIASFSHPSFLWLKWRASR. The chain crosses the membrane as a helical span at residues 129 to 149; it reads VVVGMLWGALLLSCVSTMSLM. The Extracellular segment spans residues 150 to 186; the sequence is NEFKIYSALTRSKDTPNMTEYIRLKRQEYNLMHVLGN. Asn166 is a glycosylation site (N-linked (GlcNAc...) asparagine). The helical transmembrane segment at 187 to 207 threads the bilayer; the sequence is LWKIPSLIVSLVAYLLLLLSL. At 208–234 the chain is on the cytoplasmic side; that stretch reads GKHTQQMQQYSIDSRDQSAEAHKRAMR. A helical membrane pass occupies residues 235–255; sequence IISSFLLFFLFYFLSFMILSS. At 256–266 the chain is on the extracellular side; sequence SRFLPETRIAR. The helical transmembrane segment at 267 to 287 threads the bilayer; sequence IIGVVISMSYLVGDSFILIVC. The Cytoplasmic segment spans residues 288–316; the sequence is NNKLKHTFVAMLPCECGHLKPGSKGPSAS.

Belongs to the G-protein coupled receptor T2R family.

The protein localises to the membrane. In terms of biological role, gustducin-coupled receptor implicated in the perception of bitter compounds in the oral cavity and the gastrointestinal tract. Signals through PLCB2 and the calcium-regulated cation channel TRPM5. The protein is Taste receptor type 2 member 3 (Tas2r3) of Mus musculus (Mouse).